We begin with the raw amino-acid sequence, 183 residues long: Small ribosomal subunit protein uS4c (183 aa).

The 62-residue stretch at 82–143 folds into the S4 RNA-binding domain; the sequence is MRLDNILFRL…KQRSKALIQN (62 aa).

This sequence belongs to the universal ribosomal protein uS4 family. In terms of assembly, part of the 30S ribosomal subunit. Contacts protein S5. The interaction surface between S4 and S5 is involved in control of translational fidelity.

The protein resides in the plastid. It localises to the chloroplast. One of the primary rRNA binding proteins, it binds directly to 16S rRNA where it nucleates assembly of the body of the 30S subunit. In terms of biological role, with S5 and S12 plays an important role in translational accuracy. The chain is Small ribosomal subunit protein uS4c (rps4) from Sparaxis sp. (strain Lejeune 1997).